Here is a 98-residue protein sequence, read N- to C-terminus: MSVLTFLKPRGSSSVARERLQLILAHERAERSETGRPDLIITLREEILNVIAKHVTVERDKVQIKLERGEGVSTLGVDIEFPVDAISKAKPKAKRAIA.

This sequence belongs to the MinE family.

Functionally, prevents the cell division inhibition by proteins MinC and MinD at internal division sites while permitting inhibition at polar sites. This ensures cell division at the proper site by restricting the formation of a division septum at the midpoint of the long axis of the cell. This chain is Cell division topological specificity factor, found in Methylorubrum populi (strain ATCC BAA-705 / NCIMB 13946 / BJ001) (Methylobacterium populi).